The primary structure comprises 63 residues: uncharacterized protein (63 aa).

The protein resides in the mitochondrion. This is an uncharacterized protein from Marchantia polymorpha (Common liverwort).